Reading from the N-terminus, the 93-residue chain is Small ribosomal subunit protein uS19 (93 aa).

Belongs to the universal ribosomal protein uS19 family.

In terms of biological role, protein S19 forms a complex with S13 that binds strongly to the 16S ribosomal RNA. This is Small ribosomal subunit protein uS19 from Symbiobacterium thermophilum (strain DSM 24528 / JCM 14929 / IAM 14863 / T).